The chain runs to 608 residues: X-ray repair cross-complementing protein 6 (608 aa).

Basic and acidic residues predominate over residues 1–11 (MSEWESYYKTE). The interval 1-29 (MSEWESYYKTEGEEEEEEEESPDTGGEYK) is disordered. Serine 2 carries the post-translational modification N-acetylserine. Position 2 is a phosphoserine (serine 2). A Phosphoserine; by PRKDC modification is found at serine 6. Positions 12–22 (GEEEEEEEESP) are enriched in acidic residues. Lysine 29 serves as the catalytic Schiff-base intermediate with DNA; for 5'-deoxyribose-5-phosphate lyase activity. Lysine 29 is modified (N6-acetyllysine). Position 49 is a phosphoserine; by PRKDC (serine 49). The region spanning 259–466 (FKLGEDVVLM…IDKMKAIVQK (208 aa)) is the Ku domain. Residues 275–339 (VQKANKPFPV…EETEELKRFD (65 aa)) form a DNA-binding region. Residue lysine 315 forms a Glycyl lysine isopeptide (Lys-Gly) (interchain with G-Cter in SUMO2) linkage. N6-acetyllysine is present on residues lysine 329, lysine 336, and lysine 459. Positions 371 to 480 (SLVSGSSTLF…YRSDSFENPV (110 aa)) are interaction with XRCC5. 3 positions are modified to phosphoserine: serine 475, serine 518, and serine 548. The segment at 534-557 (PEGKVAKRKQDDEGSTSKKPKVEL) is disordered. Positions 537–557 (KVAKRKQDDEGSTSKKPKVEL) are enriched in basic and acidic residues. The interaction with DEAF1 stretch occupies residues 548–607 (STSKKPKVELSEEELKAHFRKGTLGKLTVPTLKDICKAHGLKSGPKKQELLDALIRHLEK). Residue lysine 554 forms a Glycyl lysine isopeptide (Lys-Gly) (interchain with G-Cter in SUMO2) linkage. Serine 558 is modified (phosphoserine). Lysine 568 carries the post-translational modification N6,N6,N6-trimethyllysine. In terms of domain architecture, SAP spans 571 to 605 (LGKLTVPTLKDICKAHGLKSGPKKQELLDALIRHL). The segment at 576-581 (VPTLKD) is interaction with BAX.

This sequence belongs to the ku70 family. Heterodimer composed of XRCC5/Ku80 and XRCC6/Ku70. Component of the core long-range non-homologous end joining (NHEJ) complex (also named DNA-PK complex) composed of PRKDC, LIG4, XRCC4, XRCC6/Ku70, XRCC5/Ku86 and NHEJ1/XLF. Additional component of the NHEJ complex includes PAXX. Following autophosphorylation, PRKDC dissociates from DNA, leading to formation of the short-range NHEJ complex, composed of LIG4, XRCC4, XRCC6/Ku70, XRCC5/Ku86 and NHEJ1/XLF. The XRCC5-XRCC6 dimer also associates with NAA15, and this complex binds to the osteocalcin promoter and activates osteocalcin expression. In addition, XRCC6 interacts with the osteoblast-specific transcription factors MSX2, RUNX2 and DLX5. Interacts with ELF3. Interacts with ATP23. The XRCC5-XRRC6 dimer associates in a DNA-dependent manner with APEX1. Binds to CDK9. Identified in a complex with DEAF1 and XRCC5. Interacts with DEAF1 (via the SAND domain); the interaction is direct and may be inhibited by DNA-binding. Interacts with CLU. Interacts with NR4A3; the DNA-dependent protein kinase complex DNA-PK phosphorylates and activates NR4A3 and prevents NR4A3 ubiquitinylation and degradation. Interacts with CYREN (via KBM motif). Interacts (via N-terminus) with HSF1 (via N-terminus); this interaction is direct and prevents XRCC5/XRCC6 heterodimeric binding and non-homologous end joining (NHEJ) repair activities induced by ionizing radiation (IR). Part of the HDP-RNP complex composed of at least HEXIM1, PRKDC, XRCC5, XRCC6, paraspeckle proteins (SFPQ, NONO, PSPC1, RBM14, and MATR3) and NEAT1 RNA. Interacts with HMBOX1. Interacts with ATF7. Interacts with APLF (via KBM motif). Interacts with WRN (via KBM motif). The XRCC5-XRCC6 dimer associates with ALKBH2. Interacts with TPRN; TPRN interacts with a number of DNA damage response proteins, is recruited to sites of DNA damage and may play a role in DNA damage repair. When not acetylated, interacts with BAX. Interacts with ERCC6L2. Post-translationally, phosphorylation by PRKDC may enhance helicase activity. Phosphorylation of Ser-49 does not affect DNA repair. In terms of processing, ADP-ribosylated by PARP3. Methylation by SETD4 leads to accumulation in the cytoplasm and is a prerequisite for acetylation, possibly due to the change of subcellular from the nucleus to the cytosol initiated by methylation, acetylation occurring in the cytosol. Post-translationally, acetylation can be catalyzed in vitro by CREBBP/CBP and KAT2B/PCAF.

The protein resides in the nucleus. The protein localises to the chromosome. It is found in the cytoplasm. Its function is as follows. Single-stranded DNA-dependent ATP-dependent helicase that plays a key role in DNA non-homologous end joining (NHEJ) by recruiting DNA-PK to DNA. Required for double-strand break repair and V(D)J recombination. Also has a role in chromosome translocation. Has a role in chromosome translocation. The DNA helicase II complex binds preferentially to fork-like ends of double-stranded DNA in a cell cycle-dependent manner. It works in the 3'-5' direction. During NHEJ, the XRCC5-XRRC6 dimer performs the recognition step: it recognizes and binds to the broken ends of the DNA and protects them from further resection. Binding to DNA may be mediated by XRCC6. The XRCC5-XRRC6 dimer acts as a regulatory subunit of the DNA-dependent protein kinase complex DNA-PK by increasing the affinity of the catalytic subunit PRKDC to DNA by 100-fold. The XRCC5-XRRC6 dimer is probably involved in stabilizing broken DNA ends and bringing them together. The assembly of the DNA-PK complex to DNA ends is required for the NHEJ ligation step. Probably also acts as a 5'-deoxyribose-5-phosphate lyase (5'-dRP lyase), by catalyzing the beta-elimination of the 5' deoxyribose-5-phosphate at an abasic site near double-strand breaks. 5'-dRP lyase activity allows to 'clean' the termini of abasic sites, a class of nucleotide damage commonly associated with strand breaks, before such broken ends can be joined. The XRCC5-XRRC6 dimer together with APEX1 acts as a negative regulator of transcription. In association with NAA15, the XRCC5-XRRC6 dimer binds to the osteocalcin promoter and activates osteocalcin expression. Plays a role in the regulation of DNA virus-mediated innate immune response by assembling into the HDP-RNP complex, a complex that serves as a platform for IRF3 phosphorylation and subsequent innate immune response activation through the cGAS-STING pathway. Negatively regulates apoptosis by interacting with BAX and sequestering it from the mitochondria. Might have deubiquitination activity, acting on BAX. The polypeptide is X-ray repair cross-complementing protein 6 (Xrcc6) (Mus musculus (Mouse)).